We begin with the raw amino-acid sequence, 535 residues long: CTP synthase (535 aa).

The segment at 1 to 268 is amidoligase domain; the sequence is MSTKYIFVTG…DQIVCDHLKL (268 aa). Ser-14 provides a ligand contact to CTP. UTP is bound at residue Ser-14. Position 15-20 (15-20) interacts with ATP; the sequence is SMGKGI. An L-glutamine-binding site is contributed by Tyr-55. Asp-72 serves as a coordination point for ATP. Positions 72 and 142 each coordinate Mg(2+). Residues 149–151, 189–194, and Lys-225 contribute to the CTP site; these read DME and KTKIAQ. UTP-binding positions include 189–194 and Lys-225; that span reads KTKIAQ. Val-243 is an ATP binding site. Positions 293–535 constitute a Glutamine amidotransferase type-1 domain; that stretch reads KIALVGKYVE…FIRVAVENSK (243 aa). Gly-355 is an L-glutamine binding site. Cys-382 functions as the Nucleophile; for glutamine hydrolysis in the catalytic mechanism. L-glutamine-binding positions include 383 to 386, Glu-406, and Arg-464; that span reads LGMQ. Catalysis depends on residues His-509 and Glu-511.

The protein belongs to the CTP synthase family. As to quaternary structure, homotetramer. In contrast to E.coli CTP synthase, remains a tetramer at dilute enzyme concentrations even in the absence of Mg(2+), ATP and UTP.

The enzyme catalyses UTP + L-glutamine + ATP + H2O = CTP + L-glutamate + ADP + phosphate + 2 H(+). It carries out the reaction L-glutamine + H2O = L-glutamate + NH4(+). The catalysed reaction is UTP + NH4(+) + ATP = CTP + ADP + phosphate + 2 H(+). It functions in the pathway pyrimidine metabolism; CTP biosynthesis via de novo pathway; CTP from UDP: step 2/2. Its activity is regulated as follows. Allosterically activated by GTP, when glutamine is the substrate. GTP has no effect on the reaction when ammonia is the substrate. The allosteric effector GTP functions by stabilizing the protein conformation that binds the tetrahedral intermediate(s) formed during glutamine hydrolysis. Also activated by magnesium. Allosterically inhibited by CTP. Its function is as follows. Catalyzes the ATP-dependent amination of UTP to CTP with either L-glutamine or ammonia as the source of nitrogen. Is essential for the synthesis of CTP de novo. Contrary to other bacterial CTP synthases, the lactococcal enzyme is also able to convert dUTP to dCTP, but this reaction may not play a significant physiological role. Regulates intracellular CTP levels through interactions with the four ribonucleotide triphosphates. This chain is CTP synthase, found in Lactococcus lactis subsp. cremoris (strain MG1363).